Consider the following 156-residue polypeptide: Aspercryptin biosynthesis cluster protein B (156 aa).

Positions 1 to 39 (MRMANRIGAGRKSALQLSHLRTRLTSSAAAVATAPTLDP) are cleaved as a signal peptide.

It belongs to the YciI family.

The protein operates within secondary metabolite biosynthesis. Part of the gene cluster that mediates the biosynthesis of aspercryptins, linear lipopeptides built from six amino acids including 2 highly unusual and nonproteogenic amino acids, 2-amino-octanoic acid (2aoa) and 2-amino-dodecanol (2adol). The core structure of aspercryptins is as follows: Ser/Ala-Thr-Ile/Val-2aoa-Aasn-2adol. The first step of aspercryptin biosynthesis is the generation of the fatty acid precursors, octanoic and dodecanoic acids, by the FAS subunits atnF and atnM. The fatty acid precursors are likely transformed into the corresponding alpha-amino fatty acids in three steps. First, they are hydroxylated by the cytochrome P450 monooxygenase atnE, then oxidized to the corresponding alpha-keto acids by the NAD(P)-dependent oxidoreductase atnD, and finally converted to the alpha-amino fatty acids by the PLP-dependent aminotransferases atnH or atnJ. the alpha-amino fatty acids, 2-amino-octanoic and 2-amino-dodecanoic acids, are recognized, activated, and covalently tethered to the NRPS atnA by its fourth and sixth adenylation domains. The second module of atnA is the Thr module and contains an epimerase (E) domain responsible for the epimerization of Thr to D-allo-Thr. Additionally, despite atnA having only one epimerase domain, the first amino acid of aspercryptin A1 is D-Ser, suggesting that serine is either loaded directly as D-Ser on the first module or that the epimerase domain in the threonine module epimerizes both L-Ser and L-Thr. After condensation of the hexapeptide of aspercryptin, the C-terminal reductase (TE) domain might be involved in the reductive release and production of the aldehyde hexapeptide. Further reduction would generate aspercryptins. The variety of aspercryptins produced reflects the flexibility of the atnA NRPS, allowing incorporation of alanine instead of serine, valine for isoleucine, and a C10 fatty amino alcohol instead of the C12 version. AtnB seems to be involved in the selectivity for Ile versus Val by the third module. Moreover, type B, C and D aspercryptins have an additional N-terminal cichorine, acetyl and propionyl group respectively. This is Aspercryptin biosynthesis cluster protein B from Emericella nidulans (strain FGSC A4 / ATCC 38163 / CBS 112.46 / NRRL 194 / M139) (Aspergillus nidulans).